The sequence spans 206 residues: Pyridoxine/pyridoxamine 5'-phosphate oxidase (206 aa).

FMN-binding positions include 49–54 (RMVLLK), 69–70 (YT), lysine 76, and glutamine 98. Residue lysine 54 participates in substrate binding. The substrate site is built by tyrosine 116, arginine 120, and serine 124. Residues 133–134 (QS) and tryptophan 177 each bind FMN. Position 183–185 (183–185 (RLH)) interacts with substrate. Arginine 187 serves as a coordination point for FMN.

This sequence belongs to the pyridoxamine 5'-phosphate oxidase family. Homodimer. FMN is required as a cofactor.

It carries out the reaction pyridoxamine 5'-phosphate + O2 + H2O = pyridoxal 5'-phosphate + H2O2 + NH4(+). The enzyme catalyses pyridoxine 5'-phosphate + O2 = pyridoxal 5'-phosphate + H2O2. It functions in the pathway cofactor metabolism; pyridoxal 5'-phosphate salvage; pyridoxal 5'-phosphate from pyridoxamine 5'-phosphate: step 1/1. Its pathway is cofactor metabolism; pyridoxal 5'-phosphate salvage; pyridoxal 5'-phosphate from pyridoxine 5'-phosphate: step 1/1. In terms of biological role, catalyzes the oxidation of either pyridoxine 5'-phosphate (PNP) or pyridoxamine 5'-phosphate (PMP) into pyridoxal 5'-phosphate (PLP). In Jannaschia sp. (strain CCS1), this protein is Pyridoxine/pyridoxamine 5'-phosphate oxidase.